Consider the following 962-residue polypeptide: UBP9-binding protein bun107 (962 aa).

WD repeat units follow at residues 25-69 (DANC…GKAS), 77-116 (AHSA…ASCL), 121-162 (EHTD…EVMR), 172-211 (VVGP…RITD), 214-253 (GHTD…CLFS), and 302-339 (KQDA…NQDV). Residues 568–578 (SPLRIRSRPSP) show a composition bias toward low complexity. Disordered regions lie at residues 568–615 (SPLR…QIPS) and 702–758 (RAAS…PREL). Positions 707–723 (RVFSTGTSVTSPQALSK) are enriched in polar residues. Ser717 carries the post-translational modification Phosphoserine. Residues 724 to 738 (TNNTVNNAANTENNT) show a composition bias toward low complexity.

Interacts with ubp9 and bun62.

Its subcellular location is the cytoplasm. The protein resides in the cell tip. In terms of biological role, required for the ubp9 recruitment to septa and cell tips but also for its enzymatic activity at these specific locations. This Schizosaccharomyces pombe (strain 972 / ATCC 24843) (Fission yeast) protein is UBP9-binding protein bun107 (bun107).